Consider the following 241-residue polypeptide: Beta-nerve growth factor (241 aa).

The first 18 residues, 1–18 (MSMLFYTLITALLIGVQA), serve as a signal peptide directing secretion. The propeptide occupies 19 to 121 (EPYTDSNLPE…SFNRTHRSKR (103 aa)). N-linked (GlcNAc...) asparagine glycosylation is found at N69, N114, and N166. 3 disulfides stabilise this stretch: C136–C201, C179–C229, and C189–C231.

The protein belongs to the NGF-beta family. As to quaternary structure, homodimer. The homodimer interacts with a single NTRK1 chain. The homodimer interacts with a single NGFR chain. The NGF dimer interacts with a single SORCS2 chain (via extracellular domain). The NGF precursor (proNGF) binds to a receptor complex formed by SORT1 and NGFR, which leads to NGF endocytosis. Both mature NGF and the immature NGF precursor (proNGF) interact with SORCS2 and with the heterodimer formed by SORCS2 and NGFR (via extracellular domains). The NGF precursor (proNGF) has much higher affinity for SORCS2 than mature NGF. The NGF precursor (proNGF) has much higher affinity for SORT1 than mature NGF. Interacts with ADAM10 in a divalent cation-dependent manner. Interacts with SORCS3.

It is found in the secreted. It localises to the endosome lumen. Nerve growth factor is important for the development and maintenance of the sympathetic and sensory nervous systems. Extracellular ligand for the NTRK1 and NGFR receptors, activates cellular signaling cascades through those receptor tyrosine kinase to regulate neuronal proliferation, differentiation and survival. Inhibits metalloproteinase dependent proteolysis of platelet glycoprotein VI. This chain is Beta-nerve growth factor (NGF), found in Mastomys natalensis (African soft-furred rat).